Here is a 156-residue protein sequence, read N- to C-terminus: ATP synthase subunit b (156 aa).

A helical membrane pass occupies residues 7–29 (LIAQAISFAILIWFTTKFVWPYL).

The protein belongs to the ATPase B chain family. F-type ATPases have 2 components, F(1) - the catalytic core - and F(0) - the membrane proton channel. F(1) has five subunits: alpha(3), beta(3), gamma(1), delta(1), epsilon(1). F(0) has three main subunits: a(1), b(2) and c(10-14). The alpha and beta chains form an alternating ring which encloses part of the gamma chain. F(1) is attached to F(0) by a central stalk formed by the gamma and epsilon chains, while a peripheral stalk is formed by the delta and b chains.

It localises to the cell inner membrane. In terms of biological role, f(1)F(0) ATP synthase produces ATP from ADP in the presence of a proton or sodium gradient. F-type ATPases consist of two structural domains, F(1) containing the extramembraneous catalytic core and F(0) containing the membrane proton channel, linked together by a central stalk and a peripheral stalk. During catalysis, ATP synthesis in the catalytic domain of F(1) is coupled via a rotary mechanism of the central stalk subunits to proton translocation. Functionally, component of the F(0) channel, it forms part of the peripheral stalk, linking F(1) to F(0). This is ATP synthase subunit b from Methylobacillus flagellatus (strain ATCC 51484 / DSM 6875 / VKM B-1610 / KT).